The primary structure comprises 184 residues: Ribosome-recycling factor (184 aa).

The protein belongs to the RRF family.

The protein localises to the cytoplasm. Its function is as follows. Responsible for the release of ribosomes from messenger RNA at the termination of protein biosynthesis. May increase the efficiency of translation by recycling ribosomes from one round of translation to another. This is Ribosome-recycling factor from Cutibacterium acnes (strain DSM 16379 / KPA171202) (Propionibacterium acnes).